The following is a 236-amino-acid chain: uncharacterized protein (236 aa).

Residues 15-34 (GGMAHIISEAVIAGSIGLYF) form a helical membrane-spanning segment. The stretch at 36 to 71 (KKISALEQTVQELQSQLEVQNNQLQWLIQQQTRRLA) forms a coiled coil. Disordered stretches follow at residues 83 to 113 (SPLPPQRDYRQQSTTTNAAGNNGAYPSFQFK) and 185 to 236 (ATTQ…IDCE). Composition is skewed to polar residues over residues 93-102 (QQSTTTNAAG) and 185-195 (ATTQVSTFSKP). Basic and acidic residues predominate over residues 225–236 (ALDKILNDIDCE).

It localises to the membrane. This is an uncharacterized protein from Aedes vexans (Inland floodwater mosquito).